Reading from the N-terminus, the 426-residue chain is Probable serine/threonine-protein kinase PBL3 (426 aa).

Residues 1–42 are disordered; sequence MGNCLDSSAKVDSSSHSPHANSASLSSRVSSKTSRSTVPSSL. Glycine 2 carries N-myristoyl glycine lipidation. A lipid anchor (S-palmitoyl cysteine) is attached at cysteine 4. Residues 7–42 show a composition bias toward low complexity; that stretch reads SSAKVDSSSHSPHANSASLSSRVSSKTSRSTVPSSL. Threonine 72 carries the phosphothreonine modification. The 284-residue stretch at 83 to 366 folds into the Protein kinase domain; sequence FRPDSLLGEG…SEVLAKLDQL (284 aa). Residues 89-97 and lysine 121 contribute to the ATP site; that span reads LGEGGFGYV. Tyrosine 166 is modified (phosphotyrosine). The Proton acceptor role is filled by aspartate 216. Phosphoserine is present on serine 250. Threonine 251 and threonine 256 each carry phosphothreonine. Tyrosine 264 carries the phosphotyrosine modification. The span at 367-394 shows a compositional bias: polar residues; sequence ESTKPGTGVGNRQAQIDSPRGSNGSIVQ. Residues 367-426 form a disordered region; it reads ESTKPGTGVGNRQAQIDSPRGSNGSIVQKSPRRYSYDRPLLHITPGASPLPTHNHSPRVR.

Belongs to the protein kinase superfamily. Ser/Thr protein kinase family. Interacts with the Xanthomonas campestris effector XopAC/AvrAC. In terms of tissue distribution, strongly expressed in leaves, moderately in flowers, and barely in roots.

It is found in the cell membrane. The protein resides in the nucleus. The enzyme catalyses L-seryl-[protein] + ATP = O-phospho-L-seryl-[protein] + ADP + H(+). It catalyses the reaction L-threonyl-[protein] + ATP = O-phospho-L-threonyl-[protein] + ADP + H(+). Functionally, may be involved in plant defense signaling. In Arabidopsis thaliana (Mouse-ear cress), this protein is Probable serine/threonine-protein kinase PBL3.